Consider the following 291-residue polypeptide: ATP synthase gamma chain (291 aa).

This sequence belongs to the ATPase gamma chain family. In terms of assembly, F-type ATPases have 2 components, CF(1) - the catalytic core - and CF(0) - the membrane proton channel. CF(1) has five subunits: alpha(3), beta(3), gamma(1), delta(1), epsilon(1). CF(0) has three main subunits: a, b and c.

It localises to the cell inner membrane. Functionally, produces ATP from ADP in the presence of a proton gradient across the membrane. The gamma chain is believed to be important in regulating ATPase activity and the flow of protons through the CF(0) complex. This chain is ATP synthase gamma chain, found in Rhodopseudomonas palustris (strain ATCC BAA-98 / CGA009).